Here is a 369-residue protein sequence, read N- to C-terminus: UDP-N-acetylglucosamine--N-acetylmuramyl-(pentapeptide) pyrophosphoryl-undecaprenol N-acetylglucosamine transferase (369 aa).

Residues 10 to 12 (TGG), Asn124, Arg166, Ser196, and Gln300 each bind UDP-N-acetyl-alpha-D-glucosamine.

This sequence belongs to the glycosyltransferase 28 family. MurG subfamily.

Its subcellular location is the cell membrane. The catalysed reaction is di-trans,octa-cis-undecaprenyl diphospho-N-acetyl-alpha-D-muramoyl-L-alanyl-D-glutamyl-meso-2,6-diaminopimeloyl-D-alanyl-D-alanine + UDP-N-acetyl-alpha-D-glucosamine = di-trans,octa-cis-undecaprenyl diphospho-[N-acetyl-alpha-D-glucosaminyl-(1-&gt;4)]-N-acetyl-alpha-D-muramoyl-L-alanyl-D-glutamyl-meso-2,6-diaminopimeloyl-D-alanyl-D-alanine + UDP + H(+). The protein operates within cell wall biogenesis; peptidoglycan biosynthesis. In terms of biological role, cell wall formation. Catalyzes the transfer of a GlcNAc subunit on undecaprenyl-pyrophosphoryl-MurNAc-pentapeptide (lipid intermediate I) to form undecaprenyl-pyrophosphoryl-MurNAc-(pentapeptide)GlcNAc (lipid intermediate II). This is UDP-N-acetylglucosamine--N-acetylmuramyl-(pentapeptide) pyrophosphoryl-undecaprenol N-acetylglucosamine transferase from Desulfitobacterium hafniense (strain DSM 10664 / DCB-2).